A 514-amino-acid chain; its full sequence is DNA-(apurinic or apyrimidinic site) endonuclease 2 (514 aa).

Residues N8 and E48 each contribute to the Mg(2+) site. Y156 is an active-site residue. Residues D197, N199, D303, and H304 each contribute to the Mg(2+) site. D197 serves as the catalytic Proton donor/acceptor. The active-site Proton acceptor is the H304. The disordered stretch occupies residues 359–417 (PSNQTQVHMRKNKARVRSTRSRPSKTGSSRGQKNLMSYFQPSSSGPQTSNLDLPSLGTL). Positions 366–381 (HMRKNKARVRSTRSRP) are enriched in basic residues. A Glycyl lysine isopeptide (Lys-Gly) (interchain with G-Cter in ubiquitin) cross-link involves residue K371. Residues 382–410 (SKTGSSRGQKNLMSYFQPSSSGPQTSNLD) show a composition bias toward polar residues. The required for the interaction and colocalization with PCNA in nuclear foci in presence of oxidative-induced DNA damaging agents stretch occupies residues 390–397 (QKNLMSYF). The Zn(2+) site is built by C465, H468, C491, and C505. Residues 465–514 (CGGHREPCVMRTVKKPGPNLGRHFYMCARPQGPPTDPSSRCNFFLWSRPS) form a GRF-type zinc finger.

This sequence belongs to the DNA repair enzymes AP/ExoA family. Interacts with PCNA; this interaction is triggered by reactive oxygen species and increased by misincorporation of uracil in nuclear DNA. It depends on Mg(2+) as a cofactor. Mn(2+) is required as a cofactor. In terms of processing, ubiquitinated by the CUL9-RBX1 complex. Ubiquitinated by MKRN3 at Lys-371 leading to proteasomal degradation.

It is found in the nucleus. Its subcellular location is the cytoplasm. The protein resides in the mitochondrion. It carries out the reaction Exonucleolytic cleavage in the 3'- to 5'-direction to yield nucleoside 5'-phosphates.. Its activity is regulated as follows. 3'-5' exonuclease activity is activated by sodium and manganese. 3'-5' exonuclease and 3'-phosphodiesterase activities are stimulated in presence of PCNA. Functionally, functions as a weak apurinic/apyrimidinic (AP) endodeoxyribonuclease in the DNA base excision repair (BER) pathway of DNA lesions induced by oxidative and alkylating agents. Initiates repair of AP sites in DNA by catalyzing hydrolytic incision of the phosphodiester backbone immediately adjacent to the damage, generating a single-strand break with 5'-deoxyribose phosphate and 3'-hydroxyl ends. Also displays double-stranded DNA 3'-5' exonuclease, 3'-phosphodiesterase activities. Shows robust 3'-5' exonuclease activity on 3'-recessed heteroduplex DNA and is able to remove mismatched nucleotides preferentially. Shows fairly strong 3'-phosphodiesterase activity involved in the removal of 3'-damaged termini formed in DNA by oxidative agents. In the nucleus functions in the PCNA-dependent BER pathway. Plays a role in reversing blocked 3' DNA ends, problematic lesions that preclude DNA synthesis. Required for somatic hypermutation (SHM) and DNA cleavage step of class switch recombination (CSR) of immunoglobulin genes. Required for proper cell cycle progression during proliferation of peripheral lymphocytes. The chain is DNA-(apurinic or apyrimidinic site) endonuclease 2 (APEX2) from Bos taurus (Bovine).